A 901-amino-acid polypeptide reads, in one-letter code: Viral-enhancing factor (901 aa).

Positions 27-330 (HRRTEVGVVL…IFTWLYNPQR (304 aa)) constitute a Peptidase M60 domain. 10 N-linked (GlcNAc...) asparagine; by host glycosylation sites follow: asparagine 265, asparagine 278, asparagine 339, asparagine 349, asparagine 540, asparagine 594, asparagine 595, asparagine 642, asparagine 683, and asparagine 698.

Involved in disruption of the peritrophic membrane and fusion of nucleocapsids with midgut cells. This is Viral-enhancing factor (VEF) from Pseudalatia unipuncta granulosis virus (PuGV).